The primary structure comprises 199 residues: NAD(P)H dehydrogenase (quinone) (199 aa).

The 187-residue stretch at 4–190 (VLVLYYSAYG…EAAKYQGAHV (187 aa)) folds into the Flavodoxin-like domain. Residues 10–15 (SAYGHI) and 78–80 (TRF) contribute to the FMN site. Position 12 (tyrosine 12) interacts with NAD(+). Tryptophan 98 lines the substrate pocket. FMN contacts are provided by residues 113–119 (SSATQHG) and histidine 134.

Belongs to the WrbA family. FMN serves as cofactor.

The catalysed reaction is a quinone + NADH + H(+) = a quinol + NAD(+). It catalyses the reaction a quinone + NADPH + H(+) = a quinol + NADP(+). The sequence is that of NAD(P)H dehydrogenase (quinone) from Rhizobium rhizogenes (strain K84 / ATCC BAA-868) (Agrobacterium radiobacter).